We begin with the raw amino-acid sequence, 1037 residues long: Glycine dehydrogenase (decarboxylating) 1, mitochondrial (1037 aa).

The transit peptide at methionine 1 to serine 67 directs the protein to the mitochondrion. Cysteine 98 carries the S-glutathionyl cysteine; transient modification. S-glutathionyl cysteine occurs at positions 402 and 463. Lysine 774 is modified (N6-(pyridoxal phosphate)lysine). 3 positions are modified to S-glutathionyl cysteine; transient: cysteine 777, cysteine 943, and cysteine 1022.

This sequence belongs to the GcvP family. As to quaternary structure, homodimer. The glycine cleavage system is composed of four proteins: P, T, L and H. It depends on pyridoxal 5'-phosphate as a cofactor. Glutathionylated at Cys-98, Cys-777, Cys-943 and Cys-1022 after S-nitrosoglutathione treatment. In terms of processing, S-nitrosylated at unknown positions by nitric oxide. Expressed in leaves. Detected in roots, stems, flowers and siliques.

It localises to the mitochondrion. It catalyses the reaction N(6)-[(R)-lipoyl]-L-lysyl-[glycine-cleavage complex H protein] + glycine + H(+) = N(6)-[(R)-S(8)-aminomethyldihydrolipoyl]-L-lysyl-[glycine-cleavage complex H protein] + CO2. Its activity is regulated as follows. Inhibited by harpin, S-nitrosoglutathione (GSNO), nitric oxide, N-ethylmaleimide and 5,5'-dithiobis-(2-nitrobenzoic acid). Functionally, the glycine decarboxylase (GDC) or glycine cleavage system catalyzes the degradation of glycine. The P protein binds the alpha-amino group of glycine through its pyridoxal phosphate cofactor; CO(2) is released and the remaining methylamine moiety is then transferred to the lipoamide cofactor of the H protein. The polypeptide is Glycine dehydrogenase (decarboxylating) 1, mitochondrial (GLDP1) (Arabidopsis thaliana (Mouse-ear cress)).